Here is a 314-residue protein sequence, read N- to C-terminus: DNA-directed RNA polymerase subunit alpha (314 aa).

The segment at 1–227 (MIEFQKPTIS…EHLALFIDLS (227 aa)) is alpha N-terminal domain (alpha-NTD). Positions 241-314 (VETVMENKEP…GQSFKQETEN (74 aa)) are alpha C-terminal domain (alpha-CTD).

This sequence belongs to the RNA polymerase alpha chain family. Homodimer. The RNAP catalytic core consists of 2 alpha, 1 beta, 1 beta' and 1 omega subunit. When a sigma factor is associated with the core the holoenzyme is formed, which can initiate transcription.

The enzyme catalyses RNA(n) + a ribonucleoside 5'-triphosphate = RNA(n+1) + diphosphate. Functionally, DNA-dependent RNA polymerase catalyzes the transcription of DNA into RNA using the four ribonucleoside triphosphates as substrates. The protein is DNA-directed RNA polymerase subunit alpha of Oenococcus oeni (strain ATCC BAA-331 / PSU-1).